A 950-amino-acid polypeptide reads, in one-letter code: Oxysterol-binding protein-related protein 1 (950 aa).

The interval 1-237 (MNTEAEQQLL…NKVVHKALKR (237 aa)) is interaction with RAB7A. ANK repeat units lie at residues 47 to 76 (LGWT…KVNM), 80 to 109 (MGDT…DTTV), and 175 to 204 (LGNT…DPSL). The PH domain occupies 235–334 (LKRFEGPLWK…WLEAIEEHSA (100 aa)). Residues 430 to 463 (NFKLEQEQEKNKILSEALETLATEHHELERSLVE) are a coiled coil. The short motif at 469-483 (SILSEDEFYDALSGS) is the FFAT element. Disordered regions lie at residues 795-821 (KKNT…VPDS) and 881-913 (MENG…SEED). A coiled-coil region spans residues 877–913 (DIRAMENGEIDQASEEKKRLEEKQRAARKNRSKSEED). A compositionally biased stretch (basic and acidic residues) spans 890-901 (SEEKKRLEEKQR).

Belongs to the OSBP family. As to quaternary structure, interacts (via FFAT motif) with VAPA. Interacts (via FFAT motif) with VAPB. Interacts with the GTP-bound form of RAB7A. Interacts with OAS1B. Interacts (via FFAT motif) with MOSPD2 (via MSP domain). As to expression, detected in prostate and liver.

It localises to the late endosome. Its function is as follows. Binds phospholipids; exhibits strong binding to phosphatidic acid and weak binding to phosphatidylinositol 3-phosphate. Stabilizes GTP-bound RAB7A on late endosomes/lysosomes and alters functional properties of late endocytic compartments via its interaction with RAB7A. Binds 25-hydroxycholesterol and cholesterol. In Rattus norvegicus (Rat), this protein is Oxysterol-binding protein-related protein 1.